The following is a 584-amino-acid chain: Beta-(1--&gt;2)glucan export ATP-binding/permease protein NdvA (584 aa).

In terms of domain architecture, ABC transmembrane type-1 spans 21 to 301; it reads VSLVVAANII…MRQFSTQIFE (281 aa). 6 helical membrane-spanning segments follow: residues 29–49, 57–77, 136–156, 158–178, 248–268, and 272–292; these read IILAVITIAEPILFGWIIDAI, DILFLWGGFGIFNTIAFVLVA, THLATAVALVLLVPTAFSMDV, LTLVLIVLGLIYVAIGKMVMD, IASTASMLIILIIGTMLVQSG, and VGDVIAFIGFANLLIARLDQM. The 235-residue stretch at 335–569 folds into the ABC transporter domain; sequence VEFRHVSFDF…GGRFAALLHT (235 aa). 368 to 375 serves as a coordination point for ATP; sequence GPTGAGKT.

Belongs to the ABC transporter superfamily. Beta-(1--&gt;2)glucan exporter (TC 3.A.1.108.1) family. Homodimer.

Its subcellular location is the cell inner membrane. It catalyses the reaction [(1-&gt;2)-beta-D-glucosyl](n)(in) + ATP + H2O = [(1-&gt;2)-beta-D-glucosyl](n)(out) + ADP + phosphate + H(+). Involved in beta-(1--&gt;2)glucan export. Transmembrane domains (TMD) form a pore in the inner membrane and the ATP-binding domain (NBD) is responsible for energy generation. The protein is Beta-(1--&gt;2)glucan export ATP-binding/permease protein NdvA of Agrobacterium vitis (Rhizobium vitis).